We begin with the raw amino-acid sequence, 94 residues long: Co-chaperonin GroES (94 aa).

The protein belongs to the GroES chaperonin family. Heptamer of 7 subunits arranged in a ring. Interacts with the chaperonin GroEL.

It is found in the cytoplasm. Functionally, together with the chaperonin GroEL, plays an essential role in assisting protein folding. The GroEL-GroES system forms a nano-cage that allows encapsulation of the non-native substrate proteins and provides a physical environment optimized to promote and accelerate protein folding. GroES binds to the apical surface of the GroEL ring, thereby capping the opening of the GroEL channel. The polypeptide is Co-chaperonin GroES (Finegoldia magna (strain ATCC 29328 / DSM 20472 / WAL 2508) (Peptostreptococcus magnus)).